The sequence spans 908 residues: DNA (cytosine-5)-methyltransferase 3A (908 aa).

Residues 1 to 13 (MPSSGPGDTSISS) show a composition bias toward polar residues. 2 disordered regions span residues 1–183 (MPSS…PMPR) and 226–281 (SQAS…PEYE). The span at 14-37 (LEREDDRKEGEEQEENRGKEERQE) shows a compositional bias: basic and acidic residues. Basic residues predominate over residues 44 to 54 (KVGRPGRKRKH). The segment covering 69–80 (TTKSQPTAQDSG) has biased composition (polar residues). Phosphoserine is present on serine 102. Low complexity predominate over residues 110–124 (GAPAEGEGTETPPEA). Threonine 120 bears the Phosphothreonine mark. A Glycyl lysine isopeptide (Lys-Gly) (interchain with G-Cter in SUMO2) cross-link involves residue lysine 158. Arginine 167 bears the Omega-N-methylarginine mark. Residues 195 to 399 (SKRKRDEWLA…DTGKAVEVQN (205 aa)) form an interaction with DNMT1 and DNMT3B region. 2 positions are modified to phosphoserine: serine 239 and serine 251. Residues 242–256 (AVQQPTDPASPTVAT) are compositionally biased toward polar residues. Threonine 257 carries the post-translational modification Phosphothreonine. The region spanning 257 to 315 (TPEPVGADAGDKNATKAADDEPEYEDGRGFGIGELVWGKLRGFSWWPGRIVSWWMTGRS) is the PWWP domain. Positions 265-275 (AGDKNATKAAD) are enriched in basic and acidic residues. Phosphoserine occurs at positions 386 and 389. The disordered stretch occupies residues 443 to 462 (AYAPPPPAKKPRKSTTEKPK). Residues 478–610 (EVRQKCRNIE…LQMFFANNHD (133 aa)) form the ADD domain. The segment at 489–519 (ICISCGSLNVTLEHPLFIGGMCQNCKNCFLE) adopts a GATA-type; atypical zinc-finger fold. Positions 490–582 (CISCGSLNVT…KEDPWNCYMC (93 aa)) are interaction with the PRC2/EED-EZH2 complex. Residues 530 to 586 (QSYCTICCGGREVLMCGNNNCCRCFCVECVDLLVGPGAAQAAIKEDPWNCYMCGHKG) form a PHD-type; atypical zinc finger. The SAM-dependent MTase C5-type domain maps to 630–908 (IRVLSLFDGI…APLKEYFACV (279 aa)). S-adenosyl-L-methionine-binding positions include 637-641 (DGIAT), glutamate 660, and 682-684 (DVR). Cysteine 706 is an active-site residue. Cysteine 706 is subject to S-methylcysteine; by autocatalysis. Residue 887-889 (RSW) coordinates S-adenosyl-L-methionine.

The protein belongs to the class I-like SAM-binding methyltransferase superfamily. C5-methyltransferase family. In terms of assembly, heterotetramer composed of 1 DNMT3A homodimer and 2 DNMT3L subunits (DNMT3L-DNMT3A-DNMT3A-DNMT3L). Interacts with DNMT1 and DNMT3B. Interacts with MPHOSPH8. Interacts with histone H3 that is not methylated at 'Lys-4' (H3K4). Binds the ZBTB18 transcriptional repressor. Interacts with SETDB1. Associates with HDAC1 through its ADD domain. Interacts with UHRF1. Interacts with the PRC2/EED-EZH2 complex. Interacts with UBC9, PIAS1 and PIAS2. Interacts with SPOCD1. Interacts with ZNF263; recruited to the SIX3 promoter along with other proteins involved in chromatin modification and transcriptional corepression where it contributes to transcriptional repression. Post-translationally, sumoylated; sumoylation disrupts the ability to interact with histone deacetylases (HDAC1 and HDAC2) and repress transcription. Auto-methylated at Cys-706: auto-methylation takes place in absence of DNA substrate and inactivates the DNA methyltransferase activity. Inactivation by auto-methylation may be used to inactivate unused DNA methyltransferases in the cell.

The protein localises to the nucleus. Its subcellular location is the chromosome. The protein resides in the cytoplasm. It catalyses the reaction a 2'-deoxycytidine in DNA + S-adenosyl-L-methionine = a 5-methyl-2'-deoxycytidine in DNA + S-adenosyl-L-homocysteine + H(+). The enzyme catalyses L-cysteinyl-[protein] + S-adenosyl-L-methionine = S-methyl-L-cysteinyl-[protein] + S-adenosyl-L-homocysteine + H(+). With respect to regulation, activated by binding to the regulatory factor DNMT3L. Auto-methylation at Cys-706 in absence of DNA inactivates the DNA methyltransferase activity. In terms of biological role, required for genome-wide de novo methylation and is essential for the establishment of DNA methylation patterns during development. DNA methylation is coordinated with methylation of histones. It modifies DNA in a non-processive manner and also methylates non-CpG sites. May preferentially methylate DNA linker between 2 nucleosomal cores and is inhibited by histone H1. Plays a role in paternal and maternal imprinting. Required for methylation of most imprinted loci in germ cells. Acts as a transcriptional corepressor for ZBTB18. Recruited to trimethylated 'Lys-36' of histone H3 (H3K36me3) sites. Can actively repress transcription through the recruitment of HDAC activity. Also has weak auto-methylation activity on Cys-706 in absence of DNA. The protein is DNA (cytosine-5)-methyltransferase 3A (Dnmt3a) of Rattus norvegicus (Rat).